The following is a 274-amino-acid chain: uncharacterized protein (274 aa).

The protein resides in the plastid. It localises to the chloroplast. This is an uncharacterized protein from Euglena gracilis.